The primary structure comprises 156 residues: Snaclec A10 (156 aa).

A signal peptide spans 1–23 (MGRSISVSFGLLVVFLSLSGIGA). 3 disulfide bridges follow: cysteine 27–cysteine 38, cysteine 55–cysteine 154, and cysteine 129–cysteine 146. One can recognise a C-type lectin domain in the interval 34–155 (YDQHCYQAVD…CGQPYRFTCE (122 aa)).

Belongs to the snaclec family. As to quaternary structure, heterodimer; disulfide-linked. Expressed by the venom gland.

The protein localises to the secreted. In terms of biological role, interferes with one step of hemostasis (modulation of platelet aggregation, or coagulation cascade, for example). The polypeptide is Snaclec A10 (Macrovipera lebetinus (Levantine viper)).